Consider the following 301-residue polypeptide: Glycine cleavage system transcriptional activator homolog (301 aa).

Residues Pro-10–Thr-67 enclose the HTH lysR-type domain. The H-T-H motif DNA-binding region spans Phe-27 to Lys-46.

It belongs to the LysR transcriptional regulatory family.

Its subcellular location is the cytoplasm. Not known, the gcv operon regulated by the E.coli homolog does not exist in H.influenzae, so it probably acts as a transcriptional regulator on some other operon. The chain is Glycine cleavage system transcriptional activator homolog (gcvA) from Haemophilus influenzae (strain ATCC 51907 / DSM 11121 / KW20 / Rd).